An 855-amino-acid polypeptide reads, in one-letter code: DNA mismatch repair protein MutS (855 aa).

Position 613-620 (613-620 (GPNMGGKS)) interacts with ATP. A disordered region spans residues 796-816 (TTSLPHEMPSQQSGKPASPMQ).

The protein belongs to the DNA mismatch repair MutS family.

Its function is as follows. This protein is involved in the repair of mismatches in DNA. It is possible that it carries out the mismatch recognition step. This protein has a weak ATPase activity. This is DNA mismatch repair protein MutS from Pseudomonas aeruginosa (strain LESB58).